A 263-amino-acid polypeptide reads, in one-letter code: Putative cysteine-rich repeat secretory protein 31 (263 aa).

Positions Met1 to Ser32 are cleaved as a signal peptide. Gnk2-homologous domains are found at residues Tyr39 to Val141 and Tyr146 to Phe260.

This sequence belongs to the cysteine-rich repeat secretory protein family.

The protein resides in the secreted. The sequence is that of Putative cysteine-rich repeat secretory protein 31 (CRRSP31) from Arabidopsis thaliana (Mouse-ear cress).